Consider the following 446-residue polypeptide: Phosphoglucosamine mutase (446 aa).

S99 functions as the Phosphoserine intermediate in the catalytic mechanism. Mg(2+) contacts are provided by S99, D242, D244, and D246. Residue S99 is modified to Phosphoserine.

The protein belongs to the phosphohexose mutase family. Mg(2+) is required as a cofactor. Activated by phosphorylation.

The catalysed reaction is alpha-D-glucosamine 1-phosphate = D-glucosamine 6-phosphate. In terms of biological role, catalyzes the conversion of glucosamine-6-phosphate to glucosamine-1-phosphate. The protein is Phosphoglucosamine mutase of Campylobacter concisus (strain 13826).